A 172-amino-acid polypeptide reads, in one-letter code: Protein YdeJ (172 aa).

The protein belongs to the CinA family.

Its function is as follows. Does not have nicotinamide-nucleotide (NMN) amidohydrolase activity. The polypeptide is Protein YdeJ (ydeJ) (Escherichia coli (strain K12)).